A 406-amino-acid chain; its full sequence is Exodeoxyribonuclease 7 large subunit (406 aa).

This sequence belongs to the XseA family. Heterooligomer composed of large and small subunits.

The protein resides in the cytoplasm. It catalyses the reaction Exonucleolytic cleavage in either 5'- to 3'- or 3'- to 5'-direction to yield nucleoside 5'-phosphates.. Its function is as follows. Bidirectionally degrades single-stranded DNA into large acid-insoluble oligonucleotides, which are then degraded further into small acid-soluble oligonucleotides. This chain is Exodeoxyribonuclease 7 large subunit, found in Thermobifida fusca (strain YX).